The chain runs to 432 residues: Homogentisate 1,2-dioxygenase (432 aa).

The Fe cation site is built by H333, E339, and H369.

Belongs to the homogentisate dioxygenase family. Requires Fe cation as cofactor.

It carries out the reaction homogentisate + O2 = 4-maleylacetoacetate + H(+). It participates in amino-acid degradation; L-phenylalanine degradation; acetoacetate and fumarate from L-phenylalanine: step 4/6. This Dictyostelium discoideum (Social amoeba) protein is Homogentisate 1,2-dioxygenase (hgd).